A 208-amino-acid chain; its full sequence is Small ribosomal subunit protein uS4 (208 aa).

An S4 RNA-binding domain is found at 98-161; the sequence is TRLDNTVYRL…RKIPVIAEAQ (64 aa).

Belongs to the universal ribosomal protein uS4 family. As to quaternary structure, part of the 30S ribosomal subunit. Contacts protein S5. The interaction surface between S4 and S5 is involved in control of translational fidelity.

Functionally, one of the primary rRNA binding proteins, it binds directly to 16S rRNA where it nucleates assembly of the body of the 30S subunit. In terms of biological role, with S5 and S12 plays an important role in translational accuracy. This Maridesulfovibrio salexigens (strain ATCC 14822 / DSM 2638 / NCIMB 8403 / VKM B-1763) (Desulfovibrio salexigens) protein is Small ribosomal subunit protein uS4.